Consider the following 493-residue polypeptide: 3-octaprenyl-4-hydroxybenzoate carboxy-lyase (493 aa).

Position 172 (Asn172) interacts with Mn(2+). Residues 175 to 177, 189 to 191, and 194 to 195 each bind prenylated FMN; these read IYR, RWL, and RG. Glu238 provides a ligand contact to Mn(2+). The active-site Proton donor is Asp287.

It belongs to the UbiD family. As to quaternary structure, homohexamer. It depends on prenylated FMN as a cofactor. Requires Mn(2+) as cofactor.

Its subcellular location is the cell membrane. The catalysed reaction is a 4-hydroxy-3-(all-trans-polyprenyl)benzoate + H(+) = a 2-(all-trans-polyprenyl)phenol + CO2. It participates in cofactor biosynthesis; ubiquinone biosynthesis. In terms of biological role, catalyzes the decarboxylation of 3-octaprenyl-4-hydroxy benzoate to 2-octaprenylphenol, an intermediate step in ubiquinone biosynthesis. The protein is 3-octaprenyl-4-hydroxybenzoate carboxy-lyase of Shewanella woodyi (strain ATCC 51908 / MS32).